A 215-amino-acid polypeptide reads, in one-letter code: Large ribosomal subunit protein uL3 (215 aa).

A disordered region spans residues 136–161 (GVSISHRSHGSTGQRQDPGKVFKGKK). Position 151 is an N5-methylglutamine (Gln-151).

The protein belongs to the universal ribosomal protein uL3 family. As to quaternary structure, part of the 50S ribosomal subunit. Forms a cluster with proteins L14 and L19. Methylated by PrmB.

In terms of biological role, one of the primary rRNA binding proteins, it binds directly near the 3'-end of the 23S rRNA, where it nucleates assembly of the 50S subunit. The chain is Large ribosomal subunit protein uL3 from Rickettsia akari (strain Hartford).